A 407-amino-acid chain; its full sequence is 1-deoxy-D-xylulose 5-phosphate reductoisomerase (407 aa).

Residues Thr-25, Gly-26, Ser-27, Ile-28, Asn-53, and Asn-136 each contribute to the NADPH site. Lys-137 serves as a coordination point for 1-deoxy-D-xylulose 5-phosphate. Glu-138 is an NADPH binding site. Residue Asp-162 participates in Mn(2+) binding. Positions 163, 164, 188, and 211 each coordinate 1-deoxy-D-xylulose 5-phosphate. Glu-164 serves as a coordination point for Mn(2+). Gly-217 lines the NADPH pocket. Positions 224, 229, 230, and 233 each coordinate 1-deoxy-D-xylulose 5-phosphate. A Mn(2+)-binding site is contributed by Glu-233.

It belongs to the DXR family. The cofactor is Mg(2+). Requires Mn(2+) as cofactor.

It catalyses the reaction 2-C-methyl-D-erythritol 4-phosphate + NADP(+) = 1-deoxy-D-xylulose 5-phosphate + NADPH + H(+). The protein operates within isoprenoid biosynthesis; isopentenyl diphosphate biosynthesis via DXP pathway; isopentenyl diphosphate from 1-deoxy-D-xylulose 5-phosphate: step 1/6. Functionally, catalyzes the NADPH-dependent rearrangement and reduction of 1-deoxy-D-xylulose-5-phosphate (DXP) to 2-C-methyl-D-erythritol 4-phosphate (MEP). The sequence is that of 1-deoxy-D-xylulose 5-phosphate reductoisomerase from Rhodopseudomonas palustris (strain BisB5).